The sequence spans 182 residues: Probable RNA 2'-phosphotransferase (182 aa).

It belongs to the KptA/TPT1 family.

Removes the 2'-phosphate from RNA via an intermediate in which the phosphate is ADP-ribosylated by NAD followed by a presumed transesterification to release the RNA and generate ADP-ribose 1''-2''-cyclic phosphate (APPR&gt;P). May function as an ADP-ribosylase. The polypeptide is Probable RNA 2'-phosphotransferase (Acetivibrio thermocellus (strain ATCC 27405 / DSM 1237 / JCM 9322 / NBRC 103400 / NCIMB 10682 / NRRL B-4536 / VPI 7372) (Clostridium thermocellum)).